The chain runs to 139 residues: Protein COLD-REGULATED 15A, chloroplastic (139 aa).

The transit peptide at 1 to 40 directs the protein to the chloroplast; it reads MAMSFSGAVLTGMASSFHSGAKQSSFGAVRVGQKTQFVVV.

It belongs to the COR15 protein family. As to quaternary structure, forms homooligomers which interact with potential stromal substrates in the stroma of chloroplasts. Interacts with the galactose headgroup of the chloroplast lipid monogalactosyldiacylglycerol (MGDG).

The protein localises to the plastid. Its subcellular location is the chloroplast stroma. Its function is as follows. Exhibits cryoprotective activity toward stromal substrates (e.g. LDH and rubisco) in chloroplasts and in protoplasts and confers freezing tolerance to plants in a CBF-dependent manner. Protectant against various stresses (e.g. cold, drought and heat stress) by preventing protein aggregation (e.g. LDH) and attenuating enzyme inactivation. Influences the intrinsic curvature of the inner membrane of the chloroplast envelope, and modulates the freeze-induced lamellar-to-hexagonal II phase transitions that occur in regions where the plasma membrane is brought into close apposition with the chloroplast envelope during freeze-induced osmotic contraction. Mediates a shift in the melting curves of phospholipids-containing membranes to lower temperatures. Involved in the regulation of leaf senescence by abscisic acid (ABA) in a VNI2-dependent manner. The chain is Protein COLD-REGULATED 15A, chloroplastic from Arabidopsis thaliana (Mouse-ear cress).